The primary structure comprises 740 residues: Polyribonucleotide nucleotidyltransferase (740 aa).

Residues D492 and D498 each coordinate Mg(2+). One can recognise a KH domain in the interval P559–I618. The S1 motif domain maps to G628–R696.

This sequence belongs to the polyribonucleotide nucleotidyltransferase family. Mg(2+) serves as cofactor.

The protein resides in the cytoplasm. The enzyme catalyses RNA(n+1) + phosphate = RNA(n) + a ribonucleoside 5'-diphosphate. Functionally, involved in mRNA degradation. Catalyzes the phosphorolysis of single-stranded polyribonucleotides processively in the 3'- to 5'-direction. The protein is Polyribonucleotide nucleotidyltransferase of Orientia tsutsugamushi (strain Boryong) (Rickettsia tsutsugamushi).